A 187-amino-acid polypeptide reads, in one-letter code: Elongation factor P (187 aa).

This sequence belongs to the elongation factor P family.

The protein resides in the cytoplasm. The protein operates within protein biosynthesis; polypeptide chain elongation. In terms of biological role, involved in peptide bond synthesis. Stimulates efficient translation and peptide-bond synthesis on native or reconstituted 70S ribosomes in vitro. Probably functions indirectly by altering the affinity of the ribosome for aminoacyl-tRNA, thus increasing their reactivity as acceptors for peptidyl transferase. The protein is Elongation factor P of Granulibacter bethesdensis (strain ATCC BAA-1260 / CGDNIH1).